We begin with the raw amino-acid sequence, 389 residues long: Sterol methyltransferase-like 1 (389 aa).

The helical transmembrane segment at 25–45 (IAAGVTAAVVIGGYIWIITEL) threads the bilayer.

Belongs to the class I-like SAM-binding methyltransferase superfamily. Erg6/SMT family.

Its subcellular location is the microsome membrane. Functionally, unable to convert squalene, botryococcene, cycloartenol, zymosterol or lanosterol to mono-, di-, tri- or tetramethylated derivatives. The chain is Sterol methyltransferase-like 1 (SMT-1) from Botryococcus braunii (Green alga).